The sequence spans 282 residues: D-alanine aminotransferase (282 aa).

Position 32 (Y32) interacts with substrate. Residue R51 participates in pyridoxal 5'-phosphate binding. Substrate contacts are provided by R99 and H101. The active-site Proton acceptor is the K146. The residue at position 146 (K146) is an N6-(pyridoxal phosphate)lysine. Position 178 (E178) interacts with pyridoxal 5'-phosphate.

It belongs to the class-IV pyridoxal-phosphate-dependent aminotransferase family. As to quaternary structure, homodimer. It depends on pyridoxal 5'-phosphate as a cofactor.

It catalyses the reaction D-alanine + 2-oxoglutarate = D-glutamate + pyruvate. Functionally, acts on the D-isomers of alanine, leucine, aspartate, glutamate, aminobutyrate, norvaline and asparagine. The enzyme transfers an amino group from a substrate D-amino acid to the pyridoxal phosphate cofactor to form pyridoxamine and an alpha-keto acid in the first half-reaction. The second half-reaction is the reverse of the first, transferring the amino group from the pyridoxamine to a second alpha-keto acid to form the product D-amino acid via a ping-pong mechanism. This is an important process in the formation of D-alanine and D-glutamate, which are essential bacterial cell wall components. This Staphylococcus aureus (strain COL) protein is D-alanine aminotransferase (dat).